We begin with the raw amino-acid sequence, 364 residues long: Mannonate dehydratase (364 aa).

This sequence belongs to the mannonate dehydratase family. Requires Fe(2+) as cofactor. It depends on Mn(2+) as a cofactor.

The enzyme catalyses D-mannonate = 2-dehydro-3-deoxy-D-gluconate + H2O. It participates in carbohydrate metabolism; pentose and glucuronate interconversion. Functionally, catalyzes the dehydration of D-mannonate. The sequence is that of Mannonate dehydratase from Streptococcus equi subsp. zooepidemicus (strain MGCS10565).